A 206-amino-acid polypeptide reads, in one-letter code: tRNA (guanine-N(7)-)-methyltransferase (206 aa).

S-adenosyl-L-methionine is bound by residues Glu37, Glu62, Asp89, and Asp112. Asp112 is a catalytic residue. 2 residues coordinate substrate: Lys116 and Asp148.

The protein belongs to the class I-like SAM-binding methyltransferase superfamily. TrmB family.

The catalysed reaction is guanosine(46) in tRNA + S-adenosyl-L-methionine = N(7)-methylguanosine(46) in tRNA + S-adenosyl-L-homocysteine. Its pathway is tRNA modification; N(7)-methylguanine-tRNA biosynthesis. In terms of biological role, catalyzes the formation of N(7)-methylguanine at position 46 (m7G46) in tRNA. The sequence is that of tRNA (guanine-N(7)-)-methyltransferase from Myxococcus xanthus (strain DK1622).